The chain runs to 146 residues: Large ribosomal subunit protein uL15 (146 aa).

Residues 1 to 61 are disordered; sequence MELNSLKPAA…GGQMPMHRRL (61 aa). A compositionally biased stretch (basic residues) spans 30-39; that stretch reads TATKGHKGQK.

Belongs to the universal ribosomal protein uL15 family. As to quaternary structure, part of the 50S ribosomal subunit.

Binds to the 23S rRNA. The protein is Large ribosomal subunit protein uL15 of Geotalea uraniireducens (strain Rf4) (Geobacter uraniireducens).